A 159-amino-acid polypeptide reads, in one-letter code: Dynein 18 kDa light chain, flagellar outer arm (159 aa).

EF-hand domains lie at 18–53 (EEMD…LGQN), 54–89 (PTEE…NKQM), and 129–159 (ELTV…ALLS). Asp-31, Asp-33, Ser-35, Thr-37, Glu-42, Asp-67, Asp-69, Ser-71, Cys-73, and Glu-78 together coordinate Ca(2+).

Consists of at least 3 heavy chains (alpha, beta and gamma), 2 intermediate chains and 8 light chains.

Its subcellular location is the cell projection. It localises to the cilium. It is found in the flagellum. May be involved in the calcium-mediated regulation of dynein motor function. Binds 1 mole of calcium. The sequence is that of Dynein 18 kDa light chain, flagellar outer arm from Chlamydomonas reinhardtii (Chlamydomonas smithii).